Consider the following 153-residue polypeptide: Ribosomal RNA large subunit methyltransferase H (153 aa).

S-adenosyl-L-methionine-binding positions include I75, G103, and 121–126 (LSAMTF).

Belongs to the RNA methyltransferase RlmH family. As to quaternary structure, homodimer.

The protein resides in the cytoplasm. It catalyses the reaction pseudouridine(1915) in 23S rRNA + S-adenosyl-L-methionine = N(3)-methylpseudouridine(1915) in 23S rRNA + S-adenosyl-L-homocysteine + H(+). Specifically methylates the pseudouridine at position 1915 (m3Psi1915) in 23S rRNA. The protein is Ribosomal RNA large subunit methyltransferase H of Helicobacter hepaticus (strain ATCC 51449 / 3B1).